The chain runs to 164 residues: uncharacterized protein (164 aa).

2 consecutive CBS domains span residues 9 to 66 (ATTK…DIDS) and 72 to 128 (MTKD…VHTM).

This is an uncharacterized protein from Acidianus ambivalens (Desulfurolobus ambivalens).